The primary structure comprises 226 residues: Ribose-5-phosphate isomerase A (226 aa).

Residues 28-31 (TGST), 83-86 (DGAD), and 97-100 (KGGG) each bind substrate. Catalysis depends on E106, which acts as the Proton acceptor. K124 contacts substrate.

Belongs to the ribose 5-phosphate isomerase family. In terms of assembly, homotetramer.

The catalysed reaction is aldehydo-D-ribose 5-phosphate = D-ribulose 5-phosphate. It participates in carbohydrate biosynthesis; D-ribose 5-phosphate biosynthesis. Catalyzes the reversible conversion of ribose-5-phosphate to ribulose 5-phosphate. The sequence is that of Ribose-5-phosphate isomerase A from Methanocaldococcus jannaschii (strain ATCC 43067 / DSM 2661 / JAL-1 / JCM 10045 / NBRC 100440) (Methanococcus jannaschii).